The following is a 147-amino-acid chain: Heavy metal-dependent transcription regulator 2 (147 aa).

One can recognise an HTH merR-type domain in the interval 1–69; that stretch reads MNIGEASKTS…VEQIKELLAL (69 aa). Positions 3–22 form a DNA-binding region, H-T-H motif; sequence IGEASKTSGVSSKMIRYYEQ.

The protein localises to the cytoplasm. Its function is as follows. Transcriptional regulator involved in acid tolerance. Binds copper. This is Heavy metal-dependent transcription regulator 2 (hmrR2) from Rhizobium meliloti (strain 1021) (Ensifer meliloti).